The following is a 101-amino-acid chain: Integration host factor subunit beta (101 aa).

The protein belongs to the bacterial histone-like protein family. As to quaternary structure, heterodimer of an alpha and a beta chain.

In terms of biological role, this protein is one of the two subunits of integration host factor, a specific DNA-binding protein that functions in genetic recombination as well as in transcriptional and translational control. The sequence is that of Integration host factor subunit beta from Janthinobacterium sp. (strain Marseille) (Minibacterium massiliensis).